Consider the following 151-residue polypeptide: Chaperonin GroEL (151 aa).

41–45 (DGTTT) serves as a coordination point for ATP.

It belongs to the chaperonin (HSP60) family. As to quaternary structure, forms a cylinder of 14 subunits composed of two heptameric rings stacked back-to-back. Interacts with the co-chaperonin GroES.

The protein resides in the cytoplasm. It catalyses the reaction ATP + H2O + a folded polypeptide = ADP + phosphate + an unfolded polypeptide.. Functionally, together with its co-chaperonin GroES, plays an essential role in assisting protein folding. The GroEL-GroES system forms a nano-cage that allows encapsulation of the non-native substrate proteins and provides a physical environment optimized to promote and accelerate protein folding. This chain is Chaperonin GroEL, found in Mycobacterium avium.